The following is a 418-amino-acid chain: Light-independent protochlorophyllide reductase subunit N (418 aa).

Residues Cys17, Cys42, and Cys103 each coordinate [4Fe-4S] cluster.

This sequence belongs to the BchN/ChlN family. As to quaternary structure, protochlorophyllide reductase is composed of three subunits; ChlL, ChlN and ChlB. Forms a heterotetramer of two ChlB and two ChlN subunits. [4Fe-4S] cluster is required as a cofactor.

It catalyses the reaction chlorophyllide a + oxidized 2[4Fe-4S]-[ferredoxin] + 2 ADP + 2 phosphate = protochlorophyllide a + reduced 2[4Fe-4S]-[ferredoxin] + 2 ATP + 2 H2O. Its pathway is porphyrin-containing compound metabolism; chlorophyll biosynthesis (light-independent). Its function is as follows. Component of the dark-operative protochlorophyllide reductase (DPOR) that uses Mg-ATP and reduced ferredoxin to reduce ring D of protochlorophyllide (Pchlide) to form chlorophyllide a (Chlide). This reaction is light-independent. The NB-protein (ChlN-ChlB) is the catalytic component of the complex. The chain is Light-independent protochlorophyllide reductase subunit N from Prochlorococcus marinus (strain MIT 9515).